The chain runs to 378 residues: Putative dioxygenase VC_1345 (378 aa).

H288, D294, and H324 together coordinate Fe cation.

It belongs to the homogentisate dioxygenase family. Fe cation serves as cofactor.

The polypeptide is Putative dioxygenase VC_1345 (Vibrio cholerae serotype O1 (strain ATCC 39315 / El Tor Inaba N16961)).